Here is a 1755-residue protein sequence, read N- to C-terminus: Transposon Ty1-PL Gag-Pol polyprotein (1755 aa).

Composition is skewed to polar residues over residues methionine 1 to serine 23, threonine 48 to serine 60, and glutamine 127 to phenylalanine 152. Disordered stretches follow at residues methionine 1–glutamine 93, proline 126–methionine 174, and glycine 352–threonine 421. Over residues threonine 153–threonine 165 the composition is skewed to low complexity. Residues asparagine 299–histidine 401 form an RNA-binding region. Low complexity predominate over residues asparagine 402–serine 418. Phosphoserine is present on serine 416. Residue aspartate 461 is the For protease activity; shared with dimeric partner of the active site. The segment at asparagine 583–cysteine 640 is integrase-type zinc finger-like. The 176-residue stretch at asparagine 660–proline 835 folds into the Integrase catalytic domain. 2 residues coordinate Mg(2+): aspartate 671 and aspartate 736. Disordered regions lie at residues serine 956–lysine 1087, arginine 1092–proline 1111, and aspartate 1130–threonine 1187. A compositionally biased stretch (low complexity) spans serine 960–threonine 969. Residues serine 1005–threonine 1015 show a composition bias toward polar residues. Positions glutamate 1038–serine 1053 are enriched in basic and acidic residues. Composition is skewed to polar residues over residues tyrosine 1054–aspartate 1082 and proline 1101–proline 1111. The Bipartite nuclear localization signal motif lies at lysine 1178–arginine 1212. The 139-residue stretch at asparagine 1338–glutamine 1476 folds into the Reverse transcriptase Ty1/copia-type domain. Mg(2+) is bound by residues aspartate 1346, aspartate 1427, aspartate 1428, aspartate 1610, glutamate 1652, and aspartate 1685. The 143-residue stretch at aspartate 1610–lysine 1752 folds into the RNase H Ty1/copia-type domain.

In terms of assembly, the capsid protein forms a homotrimer, from which the VLPs are assembled. The protease is a homodimer, whose active site consists of two apposed aspartic acid residues. In terms of processing, initially, virus-like particles (VLPs) are composed of the structural unprocessed proteins Gag and Gag-Pol, and also contain the host initiator methionine tRNA (tRNA(i)-Met) which serves as a primer for minus-strand DNA synthesis, and a dimer of genomic Ty RNA. Processing of the polyproteins occurs within the particle and proceeds by an ordered pathway, called maturation. First, the protease (PR) is released by autocatalytic cleavage of the Gag-Pol polyprotein yielding capsid protein p45 and a Pol-p154 precursor protein. This cleavage is a prerequisite for subsequent processing of Pol-p154 at the remaining sites to release the mature structural and catalytic proteins. Maturation takes place prior to the RT reaction and is required to produce transposition-competent VLPs.

It is found in the cytoplasm. The protein resides in the nucleus. The catalysed reaction is DNA(n) + a 2'-deoxyribonucleoside 5'-triphosphate = DNA(n+1) + diphosphate. It catalyses the reaction Endonucleolytic cleavage to 5'-phosphomonoester.. Its function is as follows. Capsid protein (CA) is the structural component of the virus-like particle (VLP), forming the shell that encapsulates the retrotransposons dimeric RNA genome. The particles are assembled from trimer-clustered units and there are holes in the capsid shells that allow for the diffusion of macromolecules. CA also has nucleocapsid-like chaperone activity, promoting primer tRNA(i)-Met annealing to the multipartite primer-binding site (PBS), dimerization of Ty1 RNA and initiation of reverse transcription. Functionally, the aspartyl protease (PR) mediates the proteolytic cleavages of the Gag and Gag-Pol polyproteins after assembly of the VLP. In terms of biological role, reverse transcriptase/ribonuclease H (RT) is a multifunctional enzyme that catalyzes the conversion of the retro-elements RNA genome into dsDNA within the VLP. The enzyme displays a DNA polymerase activity that can copy either DNA or RNA templates, and a ribonuclease H (RNase H) activity that cleaves the RNA strand of RNA-DNA heteroduplexes during plus-strand synthesis and hydrolyzes RNA primers. The conversion leads to a linear dsDNA copy of the retrotransposon that includes long terminal repeats (LTRs) at both ends. Integrase (IN) targets the VLP to the nucleus, where a subparticle preintegration complex (PIC) containing at least integrase and the newly synthesized dsDNA copy of the retrotransposon must transit the nuclear membrane. Once in the nucleus, integrase performs the integration of the dsDNA into the host genome. The polypeptide is Transposon Ty1-PL Gag-Pol polyprotein (TY1B-PL) (Saccharomyces cerevisiae (strain ATCC 204508 / S288c) (Baker's yeast)).